A 360-amino-acid polypeptide reads, in one-letter code: Peptide chain release factor 1 (360 aa).

Residue Gln235 is modified to N5-methylglutamine. Residues 285–313 form a disordered region; sequence KRQQAEASTRRNLLGSGDRSDRNRTYNFP.

Belongs to the prokaryotic/mitochondrial release factor family. Methylated by PrmC. Methylation increases the termination efficiency of RF1.

It is found in the cytoplasm. Peptide chain release factor 1 directs the termination of translation in response to the peptide chain termination codons UAG and UAA. The polypeptide is Peptide chain release factor 1 (Shigella boydii serotype 18 (strain CDC 3083-94 / BS512)).